A 98-amino-acid polypeptide reads, in one-letter code: NADH-ubiquinone oxidoreductase chain 4L (98 aa).

A run of 3 helical transmembrane segments spans residues 1 to 21, 29 to 49, and 61 to 81; these read MSMV…GLLM, SLLC…ATIL, and IILL…LVTV.

Belongs to the complex I subunit 4L family. As to quaternary structure, core subunit of respiratory chain NADH dehydrogenase (Complex I) which is composed of 45 different subunits.

It localises to the mitochondrion inner membrane. It catalyses the reaction a ubiquinone + NADH + 5 H(+)(in) = a ubiquinol + NAD(+) + 4 H(+)(out). Core subunit of the mitochondrial membrane respiratory chain NADH dehydrogenase (Complex I) which catalyzes electron transfer from NADH through the respiratory chain, using ubiquinone as an electron acceptor. Part of the enzyme membrane arm which is embedded in the lipid bilayer and involved in proton translocation. The sequence is that of NADH-ubiquinone oxidoreductase chain 4L (MT-ND4L) from Pusa caspica (Caspian seal).